The primary structure comprises 236 residues: Lipoprotein B (236 aa).

Residues 1-27 (MNKKYFKKYSSILIFSMSILAPMTLAS) form the signal peptide. Residue Cys-28 is the site of N-palmitoyl cysteine attachment. Cys-28 carries S-diacylglycerol cysteine lipidation. Disordered stretches follow at residues 35-112 (EKDK…KSNV) and 134-236 (SEKQ…GDAF). Residues 43–60 (STNLSEPNKSNTSKTNTF) show a composition bias toward polar residues. Over residues 61 to 74 (QDKKDSTNKIDSQE) the composition is skewed to basic and acidic residues. Polar residues-rich tracts occupy residues 75-112 (SSKTQSQNTSESNQNTKVDSSKTNNLATNQNNPSKSNV) and 143-157 (NASSLNSKQINNTLK). Positions 158–175 (NQDKTKQENDQFKQESKD) are enriched in basic and acidic residues. The span at 193-212 (VISSQSTTRLEMPKNDQSNS) shows a compositional bias: polar residues. A compositionally biased stretch (basic and acidic residues) spans 215-228 (EDNKKSPESPKWWE).

Belongs to the M.pulmonis LipAB lipoprotein family.

Its subcellular location is the cell membrane. The sequence is that of Lipoprotein B (lipB) from Mycoplasmopsis pulmonis (strain UAB CTIP) (Mycoplasma pulmonis).